The sequence spans 347 residues: NADH-ubiquinone oxidoreductase chain 2 (347 aa).

11 helical membrane passes run 1 to 21 (MNPI…MIVM), 25 to 45 (HWLM…PILM), 60 to 80 (FLTQ…NLMF), 89 to 109 (IFNP…LGLS), 111 to 131 (FHFW…LILL), 149 to 169 (INLD…GWGG), 178 to 198 (IMAY…TYNP), 201 to 221 (TALN…LFML), 242 to 262 (SLIL…GFIP), 274 to 294 (DSII…YFYM), and 323 to 343 (MNFL…TPIM).

This sequence belongs to the complex I subunit 2 family. As to quaternary structure, core subunit of respiratory chain NADH dehydrogenase (Complex I) which is composed of 45 different subunits. Interacts with TMEM242.

The protein resides in the mitochondrion inner membrane. The enzyme catalyses a ubiquinone + NADH + 5 H(+)(in) = a ubiquinol + NAD(+) + 4 H(+)(out). Functionally, core subunit of the mitochondrial membrane respiratory chain NADH dehydrogenase (Complex I) which catalyzes electron transfer from NADH through the respiratory chain, using ubiquinone as an electron acceptor. Essential for the catalytic activity and assembly of complex I. The sequence is that of NADH-ubiquinone oxidoreductase chain 2 from Ceratotherium simum (White rhinoceros).